Here is a 466-residue protein sequence, read N- to C-terminus: Cysteine--tRNA ligase (466 aa).

Residue cysteine 29 coordinates Zn(2+). The short motif at 31 to 41 (ATVQAAPHIGH) is the 'HIGH' region element. Cysteine 208, histidine 233, and glutamate 237 together coordinate Zn(2+). Positions 264-268 (KMSKS) match the 'KMSKS' region motif. Position 267 (lysine 267) interacts with ATP.

The protein belongs to the class-I aminoacyl-tRNA synthetase family. In terms of assembly, monomer. It depends on Zn(2+) as a cofactor.

Its subcellular location is the cytoplasm. It catalyses the reaction tRNA(Cys) + L-cysteine + ATP = L-cysteinyl-tRNA(Cys) + AMP + diphosphate. This chain is Cysteine--tRNA ligase, found in Streptomyces avermitilis (strain ATCC 31267 / DSM 46492 / JCM 5070 / NBRC 14893 / NCIMB 12804 / NRRL 8165 / MA-4680).